An 89-amino-acid chain; its full sequence is MQALFIKISGRVHGVGFRYFTYKLANKMKIKGYVRNAEDGSVEIHAEAPEEILVEFLKAVSIGPPMATVISVKYERVAGQNFTSFDIVP.

Residues 3–89 (ALFIKISGRV…QNFTSFDIVP (87 aa)) form the Acylphosphatase-like domain. Catalysis depends on residues R18 and N36.

It belongs to the acylphosphatase family.

The catalysed reaction is an acyl phosphate + H2O = a carboxylate + phosphate + H(+). The sequence is that of Acylphosphatase (acyP) from Pseudothermotoga lettingae (strain ATCC BAA-301 / DSM 14385 / NBRC 107922 / TMO) (Thermotoga lettingae).